Consider the following 735-residue polypeptide: Muskelin (735 aa).

Alanine 2 is subject to N-acetylalanine. The LisH domain occupies 172–204 (REQEAIRLCLKHFRQHNYTEAFESLQKKTKIAL). The CTLH domain maps to 206-258 (HPMLTDIHDKLVLKGDFDACEELIEKAVNDGLFNQYISQQEYKPRWSQIIPKS). Kelch repeat units follow at residues 284–330 (TVYL…SCHK), 339–391 (QIYT…FDHQ), 408–458 (ILTC…SRIG), 469–515 (CLYV…TGFT), 526–578 (EIHV…SLQE), and 597–651 (VHYL…AQVD).

Homodimer; may form higher oligomers. Identified in the CTLH complex that contains GID4, RANBP9 and/or RANBP10, MKLN1, MAEA, RMND5A (or alternatively its paralog RMND5B), GID8, ARMC8, WDR26 and YPEL5. Within this complex, MAEA, RMND5A (or alternatively its paralog RMND5B), GID8, WDR26, and RANBP9 and/or RANBP10 form the catalytic core, while GID4, MKLN1, ARMC8 and YPEL5 have ancillary roles. Interacts with RANBP9. Part of a complex consisting of RANBP9, MKLN1 and GID8. Interacts with GABRA1. Interacts with the C-terminal tail of PTGER3.

The protein resides in the cytoplasm. It is found in the cytosol. It localises to the nucleus. Its subcellular location is the nucleoplasm. The protein localises to the cell projection. The protein resides in the ruffle. It is found in the cell cortex. It localises to the synapse. Its subcellular location is the postsynapse. Its function is as follows. Component of the CTLH E3 ubiquitin-protein ligase complex that selectively accepts ubiquitin from UBE2H and mediates ubiquitination and subsequent proteasomal degradation of the transcription factor HBP1. Required for internalization of the GABA receptor GABRA1 from the cell membrane via endosomes and subsequent GABRA1 degradation. Acts as a mediator of cell spreading and cytoskeletal responses to the extracellular matrix component THBS1. This chain is Muskelin (MKLN1), found in Homo sapiens (Human).